Consider the following 124-residue polypeptide: Fluoride-specific ion channel FluC (124 aa).

4 helical membrane-spanning segments follow: residues 5–25 (ILAVSAAGIAGTLLRFAAGTW), 38–58 (TLAVNLVGCLIIGLLYGWFLL), 69–89 (GLIVGFVGGLTTFSSFSLDTL), and 97–117 (ALIAFGYLGISVFGGLLATWA). The Na(+) site is built by glycine 76 and threonine 79.

This sequence belongs to the fluoride channel Fluc/FEX (TC 1.A.43) family.

It localises to the cell inner membrane. The catalysed reaction is fluoride(in) = fluoride(out). With respect to regulation, na(+) is not transported, but it plays an essential structural role and its presence is essential for fluoride channel function. In terms of biological role, fluoride-specific ion channel. Important for reducing fluoride concentration in the cell, thus reducing its toxicity. The chain is Fluoride-specific ion channel FluC from Pseudomonas fluorescens (strain SBW25).